We begin with the raw amino-acid sequence, 319 residues long: Putative metal ion transporter YfjQ (319 aa).

2 consecutive transmembrane segments (helical) span residues I254–V274 and G290–V310.

This sequence belongs to the CorA metal ion transporter (MIT) (TC 1.A.35) family.

It localises to the cell membrane. This is Putative metal ion transporter YfjQ (yfjQ) from Bacillus subtilis (strain 168).